The following is a 946-amino-acid chain: Histone-lysine N-methyltransferase, H3 lysine-79 specific (946 aa).

The segment covering 1–18 has biased composition (basic and acidic residues); sequence MSEADAGARDESPSRTAE. Positions 1–28 are disordered; the sequence is MSEADAGARDESPSRTAEEPAAAMRIKE. The DOT1 domain maps to 54–369; that stretch reads QGKTLRLPGN…KLIKYYEDQR (316 aa). S-adenosyl-L-methionine-binding positions include 173–176, 196–205, glutamate 223, and 259–260; these read YGET, FVDLGSGIGQ, and DF. Residues 368–409 are compositionally biased toward basic and acidic residues; that stretch reads QRRRQEVKSSREGSEISDGRDMGLKKRKSQRESSVHPDKLQK. Disordered stretches follow at residues 368 to 577 and 849 to 905; these read QRRR…HGGG and PTAS…GATE. Positions 410–422 are enriched in polar residues; it reads TEQAAASSHQSPK. A compositionally biased stretch (basic and acidic residues) spans 464-484; the sequence is GKDREKEKEKKKNKIYEEKKV. Composition is skewed to low complexity over residues 491–502, 512–528, and 855–864; these read KSSSSRYSSETP, NSIS…QPKA, and SKVSPSSSSS. A compositionally biased stretch (gly residues) spans 880–903; it reads GAGGGGKRGTSGGRKSDGGGGGGA.

The protein belongs to the class I-like SAM-binding methyltransferase superfamily. DOT1 family. Interacts with zfp-1 (via C-terminus) to form a heterodimer known as the zfp-1-dot-1.1 complex or DotCom complex.

It is found in the nucleus. The protein localises to the chromosome. The enzyme catalyses L-lysyl(79)-[histone H3] + 3 S-adenosyl-L-methionine = N(6),N(6),N(6)-trimethyl-L-lysyl(79)-[histone H3] + 3 S-adenosyl-L-homocysteine + 3 H(+). Functionally, histone methyltransferase, which in complex with zfp-1, methylates 'Lys-79' of histone H3 to activate transcription. During stress, the zfp-1-dot-1.1 complex also plays a role in the deubiquitination of histone H2B sites, which negatively modulates the RNA polymerase II-induced transcription of highly expressed genes. Involved in controlling tissue-specific gene expression, particularly in the epidermis. This chain is Histone-lysine N-methyltransferase, H3 lysine-79 specific, found in Caenorhabditis elegans.